Reading from the N-terminus, the 300-residue chain is ESX-5 secretion-associated protein EspG5 (300 aa).

This sequence belongs to the EspG family. In terms of assembly, interacts specifically with ESX-5-dependent PE/PPE proteins. Forms a 1:1:1 heterotrimeric complex with the PE25/PPE41 dimer, via PPE41. Binding of EspG5 does not cause conformational changes in the PE25/PPE41 dimer. Forms a 1:1:1 heterotrimeric complex with the PE8/PPE15 dimer, via PPE15.

It is found in the cytoplasm. Its function is as follows. Specific chaperone for cognate PE/PPE proteins. Plays an important role in preventing aggregation of PE/PPE dimers. The protein is ESX-5 secretion-associated protein EspG5 of Mycobacterium tuberculosis (strain ATCC 25618 / H37Rv).